The chain runs to 205 residues: Large ribosomal subunit protein uL3c (205 aa).

The disordered stretch occupies residues 129-154 (SRGPMSHGSKNHRQPGSIGAGTTPGR).

It belongs to the universal ribosomal protein uL3 family. In terms of assembly, part of the 50S ribosomal subunit.

Its subcellular location is the plastid. The protein resides in the chloroplast. Its function is as follows. One of the primary rRNA binding proteins, it binds directly near the 3'-end of the 23S rRNA, where it nucleates assembly of the 50S subunit. The sequence is that of Large ribosomal subunit protein uL3c (rpl3) from Pyropia yezoensis (Susabi-nori).